Reading from the N-terminus, the 218-residue chain is MIRTVDIYDTSIIGVFATCTEDVVLVPPLTKPEVCALLEEVLDVRVIETLVNGSIVVGALSRGNSNGFMLPYGARAEMQRFTDIPVGILPDRLNAVGNIVFANDSAALVHPDLSDKALEAIARTLKVDVYRGTIAGIKNVGMAGVVTNKGLLVHPKVTASEREVLEKIFGFPVNIGTTNFGTQMLGSGLLANSKNFVAGSETTGPELGRIEEALGFLE.

This sequence belongs to the eIF-6 family.

In terms of biological role, binds to the 50S ribosomal subunit and prevents its association with the 30S ribosomal subunit to form the 70S initiation complex. The protein is Translation initiation factor 6 of Methanosarcina acetivorans (strain ATCC 35395 / DSM 2834 / JCM 12185 / C2A).